A 472-amino-acid chain; its full sequence is Poly(A) polymerase catalytic subunit (472 aa).

Residues Asp-194 and Asp-196 contribute to the active site.

Belongs to the poxviridae poly(A) polymerase catalytic subunit family. In terms of assembly, heterodimer of a large (catalytic) subunit and a small (regulatory) subunit.

The catalysed reaction is RNA(n) + ATP = RNA(n)-3'-adenine ribonucleotide + diphosphate. Functionally, polymerase that creates the 3'-poly(A) tail of mRNA's. The protein is Poly(A) polymerase catalytic subunit (PAPL) of Fowlpox virus (strain NVSL) (FPV).